Here is a 498-residue protein sequence, read N- to C-terminus: Putative F-box/FBD/LRR-repeat protein At4g03220 (498 aa).

An F-box domain is found at 23-71 (VDRISNLPDSLNHQILLLLPLKSAAQASLLSKRWRSLFLSLPDLDFTSI). LRR repeat units lie at residues 148 to 172 (SQNL…SSAR), 175 to 200 (FQKL…FFTD), and 235 to 259 (SLQL…CFYS). Positions 416–466 (YWESQAYELESFLNHLEFVEIHGFVECENEMSLAIFLLRHGKALIKMTLRS) constitute an FBD domain.

This Arabidopsis thaliana (Mouse-ear cress) protein is Putative F-box/FBD/LRR-repeat protein At4g03220.